Here is a 346-residue protein sequence, read N- to C-terminus: tRNA N6-adenosine threonylcarbamoyltransferase (346 aa).

Residues His-120, His-124, and Tyr-141 each contribute to the a divalent metal cation site. Substrate contacts are provided by residues 141–145, Asp-173, Gly-188, Glu-192, and Asn-277; that span reads YVSGG. Asp-305 is a binding site for a divalent metal cation.

It belongs to the KAE1 / TsaD family. Component of the EKC/KEOPS complex composed of at least BUD32, CGI121, GON7, KAE1 and PCC1; the whole complex dimerizes. A divalent metal cation serves as cofactor.

The protein localises to the cytoplasm. It localises to the nucleus. It catalyses the reaction L-threonylcarbamoyladenylate + adenosine(37) in tRNA = N(6)-L-threonylcarbamoyladenosine(37) in tRNA + AMP + H(+). Functionally, component of the EKC/KEOPS complex that is required for the formation of a threonylcarbamoyl group on adenosine at position 37 (t(6)A37) in tRNAs that read codons beginning with adenine. The complex is probably involved in the transfer of the threonylcarbamoyl moiety of threonylcarbamoyl-AMP (TC-AMP) to the N6 group of A37. KAE1 likely plays a direct catalytic role in this reaction, but requires other protein(s) of the complex to fulfill this activity. The EKC/KEOPS complex also promotes both telomere uncapping and telomere elongation. The complex is required for efficient recruitment of transcriptional coactivators. This is tRNA N6-adenosine threonylcarbamoyltransferase from Gibberella zeae (strain ATCC MYA-4620 / CBS 123657 / FGSC 9075 / NRRL 31084 / PH-1) (Wheat head blight fungus).